Here is a 367-residue protein sequence, read N- to C-terminus: Choline-phosphate cytidylyltransferase A (367 aa).

Residue methionine 1 is modified to N-acetylmethionine. The interval 1–32 is disordered; that stretch reads MDAQSSAKVNSRKRRKEAPGPNGATEEDGIPS. At lysine 8 the chain carries N6-acetyllysine. The CTP site is built by isoleucine 84, phenylalanine 85, histidine 92, and lysine 122. Phosphocholine-binding residues include lysine 122 and tryptophan 151. Residues histidine 168, aspartate 169, tyrosine 173, glutamine 195, arginine 196, threonine 197, and isoleucine 200 each coordinate CTP. Amphipathic stretches follow at residues 228–287 and 298–315; these read KELN…EFIG and ALKHMLKEGKGRMLQAIS. Phosphoserine is present on serine 233. The interval 272–293 is autoinhibitory (AI); the sequence is IDLIQKWEEKSREFIGSFLEMF. A disordered region spans residues 313 to 367; it reads AISPKQSPSSSPTHERSPSPSFRWPFSGKTSPSSSPASLSRCRAVTCDISEDEED. 5 positions are modified to phosphoserine: serine 315, serine 319, serine 321, serine 322, and serine 323. Polar residues predominate over residues 315–324; the sequence is SPKQSPSSSP. Repeat 1 spans residues 319 to 324; the sequence is SPSSSP. Residues 319-348 are 3 X repeats; that stretch reads SPSSSPTHERSPSPSFRWPFSGKTSPSSSP. Threonine 325 is subject to Phosphothreonine. Phosphoserine occurs at positions 329, 331, and 333. One copy of the 2; approximate repeat lies at 329–333; sequence SPSPS. Positions 330-352 are enriched in low complexity; it reads PSPSFRWPFSGKTSPSSSPASLS. Position 342 is a phosphothreonine (threonine 342). A phosphoserine mark is found at serine 343, serine 345, serine 346, serine 347, serine 350, and serine 352. Repeat 3 spans residues 343 to 348; sequence SPSSSP. Threonine 358 is subject to Phosphothreonine. Phosphoserine is present on serine 362.

It belongs to the cytidylyltransferase family. Homodimer. In terms of processing, the serine residues of the C-terminus are phosphorylated. The inactive soluble form is stabilized by phosphorylation, the active membrane bound form is promoted by anionic lipids or diacylglycerol, and is stabilized by dephosphorylation. Post-translationally, monoubiquitinated by the SCF(FBXL2) complex, leading to proteasomal degradation. As to expression, brain and liver (at protein level). Also found in heart, kidney, spleen, lung, skeletal muscle, ovary and testis.

It localises to the cytoplasm. Its subcellular location is the cytosol. The protein localises to the membrane. It is found in the endoplasmic reticulum membrane. The protein resides in the nucleus. The catalysed reaction is phosphocholine + CTP + H(+) = CDP-choline + diphosphate. Its pathway is phospholipid metabolism; phosphatidylcholine biosynthesis; phosphatidylcholine from phosphocholine: step 1/2. Its activity is regulated as follows. Interconverts between an inactive cytosolic form and an active membrane-bound form. Activation involves disruption of an inhibitory interaction between helices at the base of the active site and the autoinhibitory (AI) region. In terms of biological role, catalyzes the key rate-limiting step in the CDP-choline pathway for phosphatidylcholine biosynthesis. This chain is Choline-phosphate cytidylyltransferase A (Pcyt1a), found in Mus musculus (Mouse).